The following is a 139-amino-acid chain: Interleukin-5 (139 aa).

The N-terminal stretch at 1-19 (MMKILVCLPLLTLYAGCVY) is a signal peptide. N-linked (GlcNAc...) asparagine glycosylation is found at N48, N77, and N91.

This sequence belongs to the IL-5 family. In terms of assembly, homodimer; disulfide-linked. Interacts with IL5RA. Interacts with CSF2RB.

The protein resides in the secreted. Functionally, homodimeric cytokine expressed predominantly by T-lymphocytes and NK cells that plays an important role in the survival, differentiation, and chemotaxis of eosinophils. Also acts on activated and resting B-cells to induce immunoglobulin production, growth, and differentiation. Mechanistically, exerts its biological effects through a receptor composed of IL5RA subunit and the cytokine receptor common subunit beta/CSF2RB. Binding to the receptor leads to activation of various kinases including LYN, SYK and JAK2 and thereby propagates signals through the RAS-MAPK and JAK-STAT5 pathways respectively. This Notamacropus eugenii (Tammar wallaby) protein is Interleukin-5 (IL5).